Reading from the N-terminus, the 349-residue chain is Acyl-CoA:acyl-CoA alkyltransferase (349 aa).

The active-site Proton acceptor is the glutamate 97. Cysteine 123 (acyl-thioester intermediate) is an active-site residue.

The protein belongs to the thiolase-like superfamily. OleA family.

It catalyses the reaction a 1,2-saturated acyl-CoA + an acyl-CoA + H2O = an (R)-2-alkyl-3-oxoalkanoate + 2 CoA + H(+). Functionally, involved in olefin biosynthesis. Catalyzes a non-decarboxylative head-to-head Claisen condensation of two acyl-CoA molecules, generating an (R)-2-alkyl-3-oxoalkanoate. The S.oneidensis oleABCD genes produce 3,6,9,12,15,19,22,25,28-hentriacontanonaene, which may aid the cells in adapting to a sudden drop in temperature. In Shewanella oneidensis (strain ATCC 700550 / JCM 31522 / CIP 106686 / LMG 19005 / NCIMB 14063 / MR-1), this protein is Acyl-CoA:acyl-CoA alkyltransferase.